The primary structure comprises 376 residues: Endoplasmic reticulum-Golgi intermediate compartment protein 2 (376 aa).

The Cytoplasmic portion of the chain corresponds to 1–33; that stretch reads MRRLNKKKALNFVRELDAFPKVPESYVETTASG. The chain crosses the membrane as a helical span at residues 34 to 54; it reads GTVSLLAFTAMALLAFFEFFV. Over 55–318 the chain is Lumenal; that stretch reads YRDTWMKYEY…PFWQFLVRLC (264 aa). The chain crosses the membrane as a helical span at residues 319-339; it reads GIIGGIFSTTGMLHNLVGFCV. Residues 340–376 are Cytoplasmic-facing; that stretch reads DVVCCRFKLGVYKPKSMSDFDGQINSLTPLLSENAEQ.

It belongs to the ERGIC family.

It localises to the endoplasmic reticulum-Golgi intermediate compartment membrane. The protein resides in the golgi apparatus. Its subcellular location is the cis-Golgi network membrane. It is found in the endoplasmic reticulum membrane. Possible role in transport between endoplasmic reticulum and Golgi. In Danio rerio (Zebrafish), this protein is Endoplasmic reticulum-Golgi intermediate compartment protein 2 (ergic2).